The sequence spans 389 residues: S-adenosylmethionine synthase (389 aa).

His-15 contributes to the ATP binding site. Position 17 (Asp-17) interacts with Mg(2+). Glu-43 contributes to the K(+) binding site. 2 residues coordinate L-methionine: Glu-56 and Gln-99. The tract at residues 99–109 is flexible loop; it reads QSPDIAQGVNE. Residues 166-168, 234-235, Asp-243, 249-250, Ala-266, and Lys-270 each bind ATP; these read DAK, RF, and RK. Residue Asp-243 participates in L-methionine binding. Residue Lys-274 coordinates L-methionine.

Belongs to the AdoMet synthase family. In terms of assembly, homotetramer; dimer of dimers. The cofactor is Mg(2+). Requires K(+) as cofactor.

It is found in the cytoplasm. The enzyme catalyses L-methionine + ATP + H2O = S-adenosyl-L-methionine + phosphate + diphosphate. Its pathway is amino-acid biosynthesis; S-adenosyl-L-methionine biosynthesis; S-adenosyl-L-methionine from L-methionine: step 1/1. Its function is as follows. Catalyzes the formation of S-adenosylmethionine (AdoMet) from methionine and ATP. The overall synthetic reaction is composed of two sequential steps, AdoMet formation and the subsequent tripolyphosphate hydrolysis which occurs prior to release of AdoMet from the enzyme. The sequence is that of S-adenosylmethionine synthase from Neisseria gonorrhoeae (strain ATCC 700825 / FA 1090).